A 226-amino-acid chain; its full sequence is RLA class II histocompatibility antigen, DP alpha-1 chain (226 aa).

Residues 1 to 189 (EHVSVFVIFA…PIQMPETTET (189 aa)) lie on the Extracellular side of the membrane. Asn75 and Asn115 each carry an N-linked (GlcNAc...) asparagine glycan. The Ig-like C1-type domain maps to 84-176 (PEVIVFPKEP…LDAPLLTHWE (93 aa)). Cys104 and Cys160 form a disulfide bridge. A helical transmembrane segment spans residues 190 to 210 (VVCALGLVVGLAGVVVGIVLI). The Cytoplasmic segment spans residues 211-226 (TKALRSSPDPRARRPL).

Belongs to the MHC class II family.

The protein localises to the membrane. This is RLA class II histocompatibility antigen, DP alpha-1 chain from Oryctolagus cuniculus (Rabbit).